The sequence spans 125 residues: PEP-dependent dihydroxyacetone kinase 2, phosphoryl donor subunit DhaM (125 aa).

A PTS EIIA type-4 domain is found at 1–125 (MISIVLVSHS…AILQELTNVH (125 aa)). The active-site Tele-phosphohistidine intermediate is the histidine 9.

It belongs to the PEP-utilizing enzyme family. Homodimer. The dihydroxyacetone kinase complex is composed of a homodimer of DhaM, a homodimer of DhaK and the subunit DhaL.

Its subcellular location is the cytoplasm. The enzyme catalyses dihydroxyacetone + phosphoenolpyruvate = dihydroxyacetone phosphate + pyruvate. Component of the dihydroxyacetone kinase complex, which is responsible for the phosphoenolpyruvate (PEP)-dependent phosphorylation of dihydroxyacetone. DhaM serves as the phosphoryl donor. Is phosphorylated by phosphoenolpyruvate in an EI- and HPr-dependent reaction, and a phosphorelay system on histidine residues finally leads to phosphoryl transfer to DhaL and dihydroxyacetone. The polypeptide is PEP-dependent dihydroxyacetone kinase 2, phosphoryl donor subunit DhaM (Listeria innocua serovar 6a (strain ATCC BAA-680 / CLIP 11262)).